The primary structure comprises 313 residues: Ribosomal RNA small subunit methyltransferase H (313 aa).

S-adenosyl-L-methionine-binding positions include glycine 35–histidine 37, aspartate 55, phenylalanine 80, aspartate 102, and glutamine 109.

This sequence belongs to the methyltransferase superfamily. RsmH family.

The protein localises to the cytoplasm. It carries out the reaction cytidine(1402) in 16S rRNA + S-adenosyl-L-methionine = N(4)-methylcytidine(1402) in 16S rRNA + S-adenosyl-L-homocysteine + H(+). Its function is as follows. Specifically methylates the N4 position of cytidine in position 1402 (C1402) of 16S rRNA. This Shewanella putrefaciens (strain CN-32 / ATCC BAA-453) protein is Ribosomal RNA small subunit methyltransferase H.